Reading from the N-terminus, the 492-residue chain is NADH-quinone oxidoreductase subunit N (492 aa).

Helical transmembrane passes span 13 to 33, 43 to 63, 82 to 102, 110 to 132, 136 to 155, 169 to 189, 210 to 230, 245 to 265, 272 to 292, 306 to 326, 331 to 351, 377 to 397, 410 to 430, and 457 to 477; these read MLPV…GFWL, ILFV…APWA, AALL…LVSL, VSFA…IAFS, IVML…LATL, FLLG…LYGA, IGIL…KIAL, PTLV…AGML, LAAG…TLVI, LLAY…LGDT, AALG…LAVV, AVAL…AGFF, GYLL…VYYL, and VAVA…NLWY.

The protein belongs to the complex I subunit 2 family. In terms of assembly, NDH-1 is composed of 15 different subunits. Subunits NuoA, H, J, K, L, M, N constitute the membrane sector of the complex.

It localises to the cell membrane. It carries out the reaction a quinone + NADH + 5 H(+)(in) = a quinol + NAD(+) + 4 H(+)(out). Functionally, NDH-1 shuttles electrons from NADH, via FMN and iron-sulfur (Fe-S) centers, to quinones in the respiratory chain. The immediate electron acceptor for the enzyme in this species is believed to be a menaquinone. Couples the redox reaction to proton translocation (for every two electrons transferred, four hydrogen ions are translocated across the cytoplasmic membrane), and thus conserves the redox energy in a proton gradient. The protein is NADH-quinone oxidoreductase subunit N of Deinococcus radiodurans (strain ATCC 13939 / DSM 20539 / JCM 16871 / CCUG 27074 / LMG 4051 / NBRC 15346 / NCIMB 9279 / VKM B-1422 / R1).